Consider the following 882-residue polypeptide: DNA mismatch repair protein MutS (882 aa).

656-663 (GPNASGKS) is a binding site for ATP.

It belongs to the DNA mismatch repair MutS family.

In terms of biological role, this protein is involved in the repair of mismatches in DNA. It is possible that it carries out the mismatch recognition step. This protein has a weak ATPase activity. This Synechococcus elongatus (strain ATCC 33912 / PCC 7942 / FACHB-805) (Anacystis nidulans R2) protein is DNA mismatch repair protein MutS.